A 134-amino-acid chain; its full sequence is Small ribosomal subunit protein uS9 (134 aa).

The disordered stretch occupies residues 109–134 (KGDPRRKEPKKFGGRGARARRQKSYR). Residues 115-134 (KEPKKFGGRGARARRQKSYR) are compositionally biased toward basic residues.

Belongs to the universal ribosomal protein uS9 family.

This is Small ribosomal subunit protein uS9 from Methanopyrus kandleri (strain AV19 / DSM 6324 / JCM 9639 / NBRC 100938).